The sequence spans 68 residues: Large ribosomal subunit protein uL30 (68 aa).

The tract at residues 1 to 26 (MSAKKSASKATVTVQQIGSPLRREPS) is disordered. The segment covering 8 to 18 (SKATVTVQQIG) has biased composition (polar residues).

This sequence belongs to the universal ribosomal protein uL30 family. In terms of assembly, part of the 50S ribosomal subunit.

The protein is Large ribosomal subunit protein uL30 of Parvibaculum lavamentivorans (strain DS-1 / DSM 13023 / NCIMB 13966).